We begin with the raw amino-acid sequence, 317 residues long: Transcription factor EC (317 aa).

The segment at 1–90 (MTFDCRVCDQ…GLTDAPCPSI (90 aa)) is necessary for transcriptional transactivation. The bHLH domain occupies 110–163 (QKKDNHNLIERRRRYNINYRIKELGTLIPKSNDPDMRWNKGTILKASVDYIKWL). Residues 242–317 (TSPEFYEQAV…SLSSEDGDEL (76 aa)) form a necessary for transcriptional transactivation region.

It belongs to the MiT/TFE family. Homodimer. Forms heterodimers with MITF. Interacts with MITF. Forms heterodimers with TFE3. In terms of tissue distribution, expressed in osteoclast-like cells (at protein level). Expressed in cells of the mononuclear phagocyte lineage. Expressed in macrophages and in osteoclast-like cells.

The protein resides in the nucleus. Functionally, transcriptional regulator that acts as a repressor or an activator. Acts as a transcriptional transactivator on the proximal promoter region of the tartrate-resistant acid phosphatase (TRAP) E-box containing promoter. Collaborates with MITF in target gene activation. Acts as a transcriptional repressor on minimal promoter containing element F (that includes an E-box sequence). Binds to element F in an E-box sequence-specific manner. Acts as a transcriptional repressor on minimal promoter containing mu E3 enhancer sequence. Binds to mu E3 DNA sequence of the immunoglobulin heavy-chain gene enhancer. Binds DNA in a homo- or heterodimeric form. In Mus musculus (Mouse), this protein is Transcription factor EC (Tfec).